The primary structure comprises 205 residues: Small heat shock protein hspG12 (205 aa).

Positions 35 to 205 (KTIIDILPPM…YSNTIKININ (171 aa)) constitute a sHSP domain. The segment at 99–147 (PSLLDTKEDEASIEEFDEDDIKPKSTETTSTLSNSKENKKDENKSKSTE) is disordered. The span at 109-118 (ASIEEFDEDD) shows a compositional bias: acidic residues. A compositionally biased stretch (basic and acidic residues) spans 134-147 (KENKKDENKSKSTE).

It belongs to the small heat shock protein (HSP20) family.

The sequence is that of Small heat shock protein hspG12 (hspG12) from Dictyostelium discoideum (Social amoeba).